We begin with the raw amino-acid sequence, 321 residues long: Transcription factor ATOH8 (321 aa).

Disordered stretches follow at residues 59–193 and 203–222; these read GLRD…SSYS and HQDS…AASS. Positions 70–85 are enriched in pro residues; it reads VPVPVPVPVPVAPAVP. A compositionally biased stretch (basic and acidic residues) spans 93–109; it reads AGERGGSRAPEVSDARK. Over residues 121–132 the composition is skewed to pro residues; it reads LPTPPPPPPPAP. The span at 133-143 shows a compositional bias: low complexity; the sequence is QSQAPGGPEAQ. A compositionally biased stretch (pro residues) spans 160 to 186; sequence PARPAPSAPPAPPAPPESTVRPAPPTR. The basic motif; degenerate stretch occupies residues 230–243; sequence TRRLLANARERTRV. Residues 230 to 282 enclose the bHLH domain; sequence TRRLLANARERTRVHTISAAFEALRKQVPCYSYGQKLSKLAILRIACNYILSL. Residues 244–282 are helix-loop-helix motif; the sequence is HTISAAFEALRKQVPCYSYGQKLSKLAILRIACNYILSL.

As to quaternary structure, efficient DNA binding requires dimerization with another bHLH protein. Interacts with NEUROG3 and NEUROD1. Interacts with ZFPM2; mediates indirect interaction with GATA4. Forms a heterodimer with TCF3; repress transcription of TCF3 and TCF3/NEUROG3 dimer-induced transactivation of E box-dependent promoters. As to expression, expressed in lung, liver, kidney, heart and pancreas. Expressed in endothel of umbilical vessels.

The protein resides in the nucleus. It localises to the nucleus speckle. Its subcellular location is the cytoplasm. In terms of biological role, transcription factor that binds a palindromic (canonical) core consensus DNA sequence 5'-CANNTG- 3' known as an E-box element, possibly as a heterodimer with other bHLH proteins. Regulates endothelial cell proliferation, migration and tube-like structures formation. Modulates endothelial cell differentiation through NOS3. May be implicated in specification and differentiation of neuronal cell lineages in the brain. May participate in kidney development and may be involved in podocyte differentiation. During early embryonic development is involved in tissue-specific differentiation processes that are dependent on class II bHLH factors and namely modulates the differentiation program initiated by the pro-endocrine factor NEUROG3. During myogenesis, may play a role during the transition of myoblasts from the proliferative phase to the differentiation phase. Positively regulates HAMP transcription in two ways, firstly by acting directly on the HAMP promoter via E-boxes binding and indirectly through increased phosphorylation of SMAD protein complex. Repress NEUROG3-dependent gene activation in a gene-specific manner through at least two mechanisms; requires only either the sequestering of a general partner such as TCF3 through heterodimerization, either also requires binding of the bHLH domain to DNA via a basic motif. This is Transcription factor ATOH8 from Homo sapiens (Human).